Here is a 318-residue protein sequence, read N- to C-terminus: Malate dehydrogenase (318 aa).

NAD(+) is bound by residues 10–15 (GGGQIG) and D34. Substrate contacts are provided by R83 and R89. NAD(+) is bound by residues N96 and 119–121 (ISN). N121 and R152 together coordinate substrate. The active-site Proton acceptor is the H176.

Belongs to the LDH/MDH superfamily. MDH type 3 family.

The catalysed reaction is (S)-malate + NAD(+) = oxaloacetate + NADH + H(+). Functionally, catalyzes the reversible oxidation of malate to oxaloacetate. The chain is Malate dehydrogenase from Geotalea daltonii (strain DSM 22248 / JCM 15807 / FRC-32) (Geobacter daltonii).